We begin with the raw amino-acid sequence, 492 residues long: UPF0236 protein TTE0402 (492 aa).

It belongs to the UPF0236 family.

The protein is UPF0236 protein TTE0402 of Caldanaerobacter subterraneus subsp. tengcongensis (strain DSM 15242 / JCM 11007 / NBRC 100824 / MB4) (Thermoanaerobacter tengcongensis).